The chain runs to 262 residues: tRNA pseudouridine synthase A (262 aa).

Aspartate 52 functions as the Nucleophile in the catalytic mechanism. Residue tyrosine 110 participates in substrate binding.

The protein belongs to the tRNA pseudouridine synthase TruA family. As to quaternary structure, homodimer.

It carries out the reaction uridine(38/39/40) in tRNA = pseudouridine(38/39/40) in tRNA. In terms of biological role, formation of pseudouridine at positions 38, 39 and 40 in the anticodon stem and loop of transfer RNAs. The chain is tRNA pseudouridine synthase A from Hydrogenovibrio crunogenus (strain DSM 25203 / XCL-2) (Thiomicrospira crunogena).